The sequence spans 232 residues: 2-C-methyl-D-erythritol 4-phosphate cytidylyltransferase (232 aa).

It belongs to the IspD/TarI cytidylyltransferase family. IspD subfamily.

It carries out the reaction 2-C-methyl-D-erythritol 4-phosphate + CTP + H(+) = 4-CDP-2-C-methyl-D-erythritol + diphosphate. Its pathway is isoprenoid biosynthesis; isopentenyl diphosphate biosynthesis via DXP pathway; isopentenyl diphosphate from 1-deoxy-D-xylulose 5-phosphate: step 2/6. Its function is as follows. Catalyzes the formation of 4-diphosphocytidyl-2-C-methyl-D-erythritol from CTP and 2-C-methyl-D-erythritol 4-phosphate (MEP). This is 2-C-methyl-D-erythritol 4-phosphate cytidylyltransferase from Stenotrophomonas maltophilia (strain K279a).